A 247-amino-acid polypeptide reads, in one-letter code: Probable transcriptional regulatory protein ABO_0750 (247 aa).

This sequence belongs to the TACO1 family.

The protein localises to the cytoplasm. The chain is Probable transcriptional regulatory protein ABO_0750 from Alcanivorax borkumensis (strain ATCC 700651 / DSM 11573 / NCIMB 13689 / SK2).